We begin with the raw amino-acid sequence, 159 residues long: Protein-export protein SecB (159 aa).

It belongs to the SecB family. As to quaternary structure, homotetramer, a dimer of dimers. One homotetramer interacts with 1 SecA dimer.

Its subcellular location is the cytoplasm. One of the proteins required for the normal export of preproteins out of the cell cytoplasm. It is a molecular chaperone that binds to a subset of precursor proteins, maintaining them in a translocation-competent state. It also specifically binds to its receptor SecA. The chain is Protein-export protein SecB from Burkholderia vietnamiensis (strain G4 / LMG 22486) (Burkholderia cepacia (strain R1808)).